The sequence spans 151 residues: Transcriptional repressor NrdR (151 aa).

A zinc finger lies at 3 to 34 (CPFCHNDQSRVIDSRVIDSGSAIRRRRECTQC). Positions 46-136 (LLVVKRNGLT…VYKSFESADD (91 aa)) constitute an ATP-cone domain.

The protein belongs to the NrdR family. It depends on Zn(2+) as a cofactor.

Negatively regulates transcription of bacterial ribonucleotide reductase nrd genes and operons by binding to NrdR-boxes. The polypeptide is Transcriptional repressor NrdR (Corynebacterium diphtheriae (strain ATCC 700971 / NCTC 13129 / Biotype gravis)).